The following is a 228-amino-acid chain: MEEKKQQNVTIKGTKDGITLHLDDCCSFSELLKELDEKLSTHYYDGDGRSLIEVHVKVGNRYLTEVQQEEIRTLIRNKKNLVVDSIESDVITKEEAIAWKEETEIVPISKIVRSGQVLHVKGNLLLIGDVNPGGTVIAGGNIFVVGSLRGIAHAGYYGDSDAVIAASVMNPMQLRISDVAMRAPEEKEDGAEAAECAYINENNHIVVDRLQLLTHLRPNLTKLERGIV.

This sequence belongs to the MinC family. In terms of assembly, interacts with MinD and FtsZ.

Functionally, cell division inhibitor that blocks the formation of polar Z ring septums. Rapidly oscillates between the poles of the cell to destabilize FtsZ filaments that have formed before they mature into polar Z rings. Prevents FtsZ polymerization. The protein is Probable septum site-determining protein MinC of Bacillus anthracis (strain A0248).